We begin with the raw amino-acid sequence, 503 residues long: Ell-associated factor Eaf (503 aa).

2 stretches are compositionally biased toward polar residues: residues 119 to 145 (TRNE…NQGA) and 167 to 186 (ENST…SRRN). 3 disordered regions span residues 119-220 (TRNE…PAWD), 250-360 (GHAN…SQSV), and 372-503 (GGVL…DDDD). Ser196 is modified (phosphoserine). Over residues 202–215 (SPSRPVPVHRSPQS) the composition is skewed to low complexity. Composition is skewed to polar residues over residues 250-273 (GHAN…STHI) and 298-307 (MAQQQQQHPS). Residues 308–337 (NYGRGYNGGHNHAQQQQQQQRNSPPRQRPS) are compositionally biased toward low complexity. Acidic residues predominate over residues 385-400 (DSSDSDSGSDSDDSTE). Composition is skewed to low complexity over residues 406 to 437 (QGQQ…HHNQ), 454 to 472 (HQQQ…QKQQ), and 487 to 497 (LQNDLQLSSNS).

Belongs to the EAF family.

Its subcellular location is the nucleus. Promotes transcriptional elongation by Su(Tpl)/ELL. Essential for development. This chain is Ell-associated factor Eaf, found in Drosophila sechellia (Fruit fly).